The chain runs to 103 residues: Small ribosomal subunit protein uS10 (103 aa).

It belongs to the universal ribosomal protein uS10 family. Part of the 30S ribosomal subunit.

In terms of biological role, involved in the binding of tRNA to the ribosomes. The chain is Small ribosomal subunit protein uS10 from Ruminiclostridium cellulolyticum (strain ATCC 35319 / DSM 5812 / JCM 6584 / H10) (Clostridium cellulolyticum).